The chain runs to 459 residues: Protein FAM90A27P (459 aa).

The span at 1–10 (MARHSVHHQA) shows a compositional bias: basic residues. 4 disordered regions span residues 1-41 (MARH…ESRV), 74-136 (SHKE…WKEP), 153-239 (HTTK…ALQP), and 259-459 (PDAD…SDSD). Residues 125-136 (PQEKMQEAWKEP) show a composition bias toward basic and acidic residues. Polar residues predominate over residues 184 to 194 (HNDSPQLSTCG). Over residues 341 to 353 (KATAETAATKTAT) the composition is skewed to low complexity. The span at 415–427 (PPENSASAQSPRF) shows a compositional bias: polar residues.

This sequence belongs to the FAM90 family.

The chain is Protein FAM90A27P (FAM90A27P) from Homo sapiens (Human).